Reading from the N-terminus, the 50-residue chain is Sperm protamine P1 (50 aa).

Intrachain disulfides connect Cys7-Cys15 and Cys38-Cys46.

It belongs to the protamine P1 family. As to quaternary structure, cross-linked by interchain disulfide bonds around the DNA-helix. As to expression, testis.

Its subcellular location is the nucleus. It is found in the chromosome. In terms of biological role, protamines substitute for histones in the chromatin of sperm during the haploid phase of spermatogenesis. They compact sperm DNA into a highly condensed, stable and inactive complex. The protein is Sperm protamine P1 (PRM1) of Equus asinus (Donkey).